A 569-amino-acid chain; its full sequence is Estrogen receptor (569 aa).

Positions 1-151 (MYPKEEHSAG…GFDSGKETRF (151 aa)) are modulating. Residues 28-37 (PTQTFGTSSP) show a composition bias toward polar residues. The disordered stretch occupies residues 28-65 (PTQTFGTSSPAEPASVGYYPAPPDPHEEHLQTLGGGSS). 2 consecutive NR C4-type zinc fingers follow at residues 152-172 (CAVC…CEGC) and 188-212 (CPAT…LRKC). The segment at residues 152-217 (CAVCSDYASG…RLRKCYEVGM (66 aa)) is a DNA-binding region (nuclear receptor). The hinge stretch occupies residues 218–278 (MKGGIRKDRG…SGGVVSTLCM (61 aa)). The interval 223–271 (RKDRGGRSVRRERRRSSNEDRDKSSSDQCSRAGVRTTGPQDKRKKRSGG) is disordered. Positions 237–247 (RSSNEDRDKSS) are enriched in basic and acidic residues. The 237-residue stretch at 279-515 (SPDQVLLLLL…DLLLEMLDAQ (237 aa)) folds into the NR LBD domain. Residues 523–532 (VQRVWSQSEK) are compositionally biased toward polar residues. The disordered stretch occupies residues 523–569 (VQRVWSQSEKNPPSTPTTSSSSSNNSPRGGAAAIQSNGACHSHSPDP). A compositionally biased stretch (low complexity) spans 538 to 549 (PTTSSSSSNNSP).

Belongs to the nuclear hormone receptor family. NR3 subfamily. As to quaternary structure, binds DNA as a homodimer. Can form a heterodimer with ER-beta.

The protein resides in the nucleus. Its function is as follows. The steroid hormones and their receptors are involved in the regulation of eukaryotic gene expression and affect cellular proliferation and differentiation in target tissues. This is Estrogen receptor (esr1) from Danio rerio (Zebrafish).